The primary structure comprises 1129 residues: Phospholipid-transporting ATPase 11C (1129 aa).

The Cytoplasmic segment spans residues Met-1 to Asp-83. The helical transmembrane segment at Thr-84 to Ile-104 threads the bilayer. At Lys-105 to Ser-287 the chain is on the extracellular side. Residues Ile-288–Thr-308 traverse the membrane as a helical segment. Residues Leu-309–Asp-343 lie on the Cytoplasmic side of the membrane. The helical transmembrane segment at Phe-344–Glu-364 threads the bilayer. Residues Met-365–Tyr-876 are Extracellular-facing. Asp-409 serves as the catalytic 4-aspartylphosphate intermediate. The ATP site is built by Asp-409, Lys-410, and Thr-411. Asp-409 is a binding site for Mg(2+). Thr-411 serves as a coordination point for Mg(2+). The residue at position 442 (Ser-442) is a Phosphoserine. The ATP site is built by Glu-498, Phe-540, Lys-563, and Arg-594. Residues Asp-607–Ile-643 adopt a coiled-coil conformation. Residues Thr-674, Gly-675, and Asp-676 each coordinate ATP. Positions Thr-695–Leu-726 form a coiled coil. Arg-789 and Lys-795 together coordinate ATP. Asp-816 is a Mg(2+) binding site. The ATP site is built by Asn-819 and Asp-820. Asp-820 contributes to the Mg(2+) binding site. Residues Phe-877 to Phe-897 traverse the membrane as a helical segment. Topologically, residues Ser-898 to Ala-905 are cytoplasmic. The helical transmembrane segment at Ala-906 to Leu-926 threads the bilayer. Residues Glu-927 to Gln-952 are Extracellular-facing. The helical transmembrane segment at Leu-953–Gly-973 threads the bilayer. Residues Thr-974–Lys-988 are Cytoplasmic-facing. Residues Ile-989–Leu-1009 form a helical membrane-spanning segment. Residues Lys-1010 to His-1023 lie on the Extracellular side of the membrane. The helical transmembrane segment at Phe-1024–Ile-1044 threads the bilayer. The Cytoplasmic segment spans residues Trp-1045–Thr-1066. A helical membrane pass occupies residues Trp-1067–Val-1087. Residues Lys-1088–Leu-1129 lie on the Extracellular side of the membrane. Ser-1105, Ser-1113, and Ser-1123 each carry phosphoserine. The Di-leucine motif signature appears at Ser-1113–Leu-1118.

It belongs to the cation transport ATPase (P-type) (TC 3.A.3) family. Type IV subfamily. In terms of assembly, component of a P4-ATPase flippase complex which consists of a catalytic alpha subunit ATP11C and an accessory beta subunit TMEM30A. The cofactor is Mg(2+). Proteolytically cleaved by CASP3, CASP6 and CASP7. In terms of processing, phosphorylated at Ser-1113 likely by PRKCA; this creates a functional di-leucine motif that is sufficient for endocytosis. Widely expressed. Expressed in retina, brain, liver and testes (at protein level). Expressed in lung, bone marrow, lymph nodes, prostate, ovary and uterus. Expressed in fetus.

It is found in the cell membrane. It localises to the endoplasmic reticulum membrane. Its subcellular location is the early endosome membrane. The protein resides in the recycling endosome membrane. The enzyme catalyses ATP + H2O + phospholipidSide 1 = ADP + phosphate + phospholipidSide 2.. The catalysed reaction is a 1,2-diacyl-sn-glycero-3-phospho-L-serine(out) + ATP + H2O = a 1,2-diacyl-sn-glycero-3-phospho-L-serine(in) + ADP + phosphate + H(+). It catalyses the reaction a 1,2-diacyl-sn-glycero-3-phosphoethanolamine(out) + ATP + H2O = a 1,2-diacyl-sn-glycero-3-phosphoethanolamine(in) + ADP + phosphate + H(+). Catalytic component of a P4-ATPase flippase complex which catalyzes the hydrolysis of ATP coupled to the transport of aminophospholipids, phosphatidylserines (PS) and phosphatidylethanolamines (PE), from the outer to the inner leaflet of the plasma membrane. Major PS-flippase in immune cell subsets. In erythrocyte plasma membrane, it is required to maintain PS in the inner leaflet preventing its exposure on the surface. This asymmetric distribution is critical for the survival of erythrocytes in circulation since externalized PS is a phagocytic signal for erythrocyte clearance by splenic macrophages. Required for B cell differentiation past the pro-B cell stage. Seems to mediate PS flipping in pro-B cells. May be involved in the transport of cholestatic bile acids. This Mus musculus (Mouse) protein is Phospholipid-transporting ATPase 11C.